A 158-amino-acid polypeptide reads, in one-letter code: NAD(P)H-quinone oxidoreductase subunit J, chloroplastic (158 aa).

It belongs to the complex I 30 kDa subunit family. As to quaternary structure, NDH is composed of at least 16 different subunits, 5 of which are encoded in the nucleus.

The protein localises to the plastid. Its subcellular location is the chloroplast thylakoid membrane. It catalyses the reaction a plastoquinone + NADH + (n+1) H(+)(in) = a plastoquinol + NAD(+) + n H(+)(out). The catalysed reaction is a plastoquinone + NADPH + (n+1) H(+)(in) = a plastoquinol + NADP(+) + n H(+)(out). In terms of biological role, NDH shuttles electrons from NAD(P)H:plastoquinone, via FMN and iron-sulfur (Fe-S) centers, to quinones in the photosynthetic chain and possibly in a chloroplast respiratory chain. The immediate electron acceptor for the enzyme in this species is believed to be plastoquinone. Couples the redox reaction to proton translocation, and thus conserves the redox energy in a proton gradient. The sequence is that of NAD(P)H-quinone oxidoreductase subunit J, chloroplastic from Nandina domestica (Heavenly bamboo).